A 501-amino-acid polypeptide reads, in one-letter code: Pyruvate kinase (501 aa).

Residue R50 coordinates substrate. Residues N52, S54, D85, and T86 each coordinate K(+). 52–55 (NFSH) lines the ATP pocket. Positions 92 and 178 each coordinate ATP. Residue E243 coordinates Mg(2+). Residues G266, D267, and T299 each contribute to the substrate site. Position 267 (D267) interacts with Mg(2+).

The protein belongs to the pyruvate kinase family. Homotetramer. Mg(2+) serves as cofactor. It depends on K(+) as a cofactor.

The catalysed reaction is pyruvate + ATP = phosphoenolpyruvate + ADP + H(+). The protein operates within carbohydrate degradation; glycolysis; pyruvate from D-glyceraldehyde 3-phosphate: step 5/5. This Kluyveromyces lactis (strain ATCC 8585 / CBS 2359 / DSM 70799 / NBRC 1267 / NRRL Y-1140 / WM37) (Yeast) protein is Pyruvate kinase (PYK1).